Consider the following 874-residue polypeptide: MYQTTAELRSAFLEFFRSNGHQVVDSSSLVPGNDPTLLFTNAGMNQFKDVFLGMDKRNYTRATTAQRCVRAGGKHNDLDNVGYTARHHTFFEMLGNFSFGDYFKEEAIRFGWTFLTETLKLPKERLCVTIYQTDDEAFEIWNKKIGVAAENIIRIGDNKGAAYASDNFWQMGDTGPCGPCSEIFYDHGDHIWGGRPGSPEEDGDRFIEIWNIVFMQYNRQASGEMLPLPKPSVDTGMGIERIAAIMQGVHSNYEIDIFRTLIAKAAEIIGVSDLTEKSLRVIADHIRSCAFLIADGVMPSNEGRGYVLRRIIRRAVRHGNKLGATEAFFYKLVPSLIAVMGDAAKGLAETQAIVEKALKAEEEQFARTLERGLGILDTALNELKGTTLDGETVFKLYDTYGFPMDLTADVCRERNIIVDEAGFEVAMAEQRSRAQAAGNFGADYNAALKIDAETAFSGYTELAGQAKITAIYQNGESVTAIKAGDEAVVVLDVTPFYAESGGQVGDKGQLVASGVEFTVNDTQKYGQATGHQGVLATGNLSVGQVVEAKVDKKLRHRTQLNHSVTHLLHAALRQVLGTHVSQKGSLVDPERLRFDFSHFEGVKAAELKEVEELVNTQIRRNHELKTAEMGIDEAKEKGAMALFGEKYDSQVRVVTMGDFSIELCGGTHVGRTGDIGLFKITSEAGIAAGVRRIEAVTGAAAMAYVAQQQAELEEAAALLKGDANSVVAKLKAQLDKMKQLEKEMAQLKDKLAAAASADLVGDAVVVNGVNVLIKKLDGVEASSLRGLQDELKQKLKSAIIVLGTAQEGKVNLIAGVSNDLIGKVKAGELVAMVAAQVGGKGGGRPDMAQAGGSQPENLDAALAQVLPWITERLA.

His562, His566, Cys664, and His668 together coordinate Zn(2+).

The protein belongs to the class-II aminoacyl-tRNA synthetase family. It depends on Zn(2+) as a cofactor.

It is found in the cytoplasm. It carries out the reaction tRNA(Ala) + L-alanine + ATP = L-alanyl-tRNA(Ala) + AMP + diphosphate. Its function is as follows. Catalyzes the attachment of alanine to tRNA(Ala) in a two-step reaction: alanine is first activated by ATP to form Ala-AMP and then transferred to the acceptor end of tRNA(Ala). Also edits incorrectly charged Ser-tRNA(Ala) and Gly-tRNA(Ala) via its editing domain. The polypeptide is Alanine--tRNA ligase (Shewanella baltica (strain OS155 / ATCC BAA-1091)).